A 110-amino-acid chain; its full sequence is Ribonuclease P protein component 1 (110 aa).

This sequence belongs to the eukaryotic/archaeal RNase P protein component 1 family. Consists of a catalytic RNA component and at least 4-5 protein subunits.

Its subcellular location is the cytoplasm. The enzyme catalyses Endonucleolytic cleavage of RNA, removing 5'-extranucleotides from tRNA precursor.. Functionally, part of ribonuclease P, a protein complex that generates mature tRNA molecules by cleaving their 5'-ends. This is Ribonuclease P protein component 1 from Methanosarcina mazei (strain ATCC BAA-159 / DSM 3647 / Goe1 / Go1 / JCM 11833 / OCM 88) (Methanosarcina frisia).